Here is a 103-residue protein sequence, read N- to C-terminus: Large ribosomal subunit protein uL24 (103 aa).

Belongs to the universal ribosomal protein uL24 family. As to quaternary structure, part of the 50S ribosomal subunit.

One of two assembly initiator proteins, it binds directly to the 5'-end of the 23S rRNA, where it nucleates assembly of the 50S subunit. In terms of biological role, one of the proteins that surrounds the polypeptide exit tunnel on the outside of the subunit. The protein is Large ribosomal subunit protein uL24 of Pasteurella multocida (strain Pm70).